A 1386-amino-acid polypeptide reads, in one-letter code: Roundabout homolog 3 (1386 aa).

Residues 1-20 (MLRYLLKTLLQMNLFADSLA) form the signal peptide. The Extracellular portion of the chain corresponds to 21–891 (GDISNSSELL…VRLARVLREP (871 aa)). N-linked (GlcNAc...) asparagine glycans are attached at residues Asn-25, Asn-34, Asn-41, and Asn-53. 5 consecutive Ig-like C2-type domains span residues 64 to 160 (PRIV…ASLE), 166 to 253 (DDFR…AEVM), 258 to 342 (PSFL…GSLS), 347 to 440 (PQLV…ALLE), and 450 to 531 (PPVI…GEAT). A disulfide bond links Cys-85 and Cys-143. An N-linked (GlcNAc...) asparagine glycan is attached at Asn-156. Disulfide bonds link Cys-187/Cys-236, Cys-279/Cys-326, and Cys-368/Cys-424. 3 N-linked (GlcNAc...) asparagine glycosylation sites follow: Asn-410, Asn-459, and Asn-503. The cysteines at positions 472 and 521 are disulfide-linked. Disordered regions lie at residues 541 to 563 (DWGV…SQPV) and 639 to 662 (EPSP…EDPW). A compositionally biased stretch (pro residues) spans 546 to 559 (PDPPTEPSSPPGAP). Fibronectin type-III domains are found at residues 558-652 (APSQ…TQDS), 671-766 (VAVR…IPEE), and 771-869 (PPQG…SPPD). Residues Asn-784, Asn-813, and Asn-820 are each glycosylated (N-linked (GlcNAc...) asparagine). The chain crosses the membrane as a helical span at residues 892–912 (AFLAGSGAACGALLLGLCAAL). Residues 913 to 1386 (YWRRKQRKEL…PGQKRREEPR (474 aa)) lie on the Cytoplasmic side of the membrane. 3 disordered regions span residues 965–989 (SWPH…NPDP), 1028–1310 (ELQT…AVPL), and 1327–1386 (SRPS…EEPR). Over residues 1067–1083 (VKLLGKPVQMPSLNWPE) the composition is skewed to low complexity. Residues 1099 to 1112 (GPEEELEGSSEPEE) are compositionally biased toward acidic residues. Residues 1158-1169 (PSPPDPPQPPTD) are compositionally biased toward pro residues. Composition is skewed to low complexity over residues 1178-1191 (RRVP…LSVS) and 1202-1229 (PAGL…SAPG). Ser-1263 carries the post-translational modification Phosphoserine. Over residues 1294–1304 (LERERSGERKA) the composition is skewed to basic and acidic residues. The segment covering 1333–1344 (SRGQGTSTCSTA) has biased composition (polar residues). The segment covering 1345-1361 (GSNSSRGSSSSRGSRGP) has biased composition (low complexity).

The protein belongs to the immunoglobulin superfamily. ROBO family. In terms of assembly, monomer. Interacts (via Fibronectin type-III 1 domain) with NELL2 (via the EGF domains) with a 3:3 stoichiometry; this interaction promotes oligomerization of ROBO3 resulting in the repulsion of commissural axons in the midline.

It localises to the membrane. In terms of biological role, receptor involved in axon guidance during development. Acts as a multifunctional regulator of pathfinding that simultaneously mediates NELL2 repulsion, inhibits SLIT repulsion, and facilitates Netrin-1/NTN1 attraction. In spinal cord development plays a role in guiding commissural axons probably by preventing premature sensitivity to Slit proteins thus inhibiting Slit signaling through ROBO1/ROBO2. Binding OF NELL2 to the receptor ROBO3 promotes oligomerization of ROBO3, resulting in the repulsion of commissural axons in the midline. ROBO3 also indirectly boosts axon attraction to NTN1 without interacting with NTN1 itself. In Homo sapiens (Human), this protein is Roundabout homolog 3.